The sequence spans 349 residues: Glycerol-3-phosphate dehydrogenase [NAD(+)], cytoplasmic (349 aa).

Residues 10–15 (GSGDWG), lysine 120, and alanine 153 each bind NAD(+). Lysine 120 contacts substrate. Serine 154 carries the post-translational modification Phosphoserine. The active-site Proton acceptor is lysine 204. Position 269 (arginine 269) interacts with NAD(+). 269–270 (RN) serves as a coordination point for substrate. Lysine 289 carries the post-translational modification N6-succinyllysine. The NAD(+) site is built by lysine 296 and glutamine 298. A Phosphotyrosine modification is found at tyrosine 326.

The protein belongs to the NAD-dependent glycerol-3-phosphate dehydrogenase family. As to quaternary structure, homodimer.

It localises to the cytoplasm. It catalyses the reaction sn-glycerol 3-phosphate + NAD(+) = dihydroxyacetone phosphate + NADH + H(+). Functionally, has glycerol-3-phosphate dehydrogenase activity. The polypeptide is Glycerol-3-phosphate dehydrogenase [NAD(+)], cytoplasmic (GPD1) (Oryctolagus cuniculus (Rabbit)).